A 291-amino-acid polypeptide reads, in one-letter code: Shikimate dehydrogenase (NADP(+)) (291 aa).

Shikimate contacts are provided by residues Ser23–Ser25 and Thr70. Lys74 serves as the catalytic Proton acceptor. Shikimate is bound by residues Asn95 and Asp110. NADP(+)-binding positions include Gly135 to Ala139 and Leu232. Tyr234 is a shikimate binding site. Gly255 provides a ligand contact to NADP(+).

The protein belongs to the shikimate dehydrogenase family. In terms of assembly, homodimer.

The catalysed reaction is shikimate + NADP(+) = 3-dehydroshikimate + NADPH + H(+). It functions in the pathway metabolic intermediate biosynthesis; chorismate biosynthesis; chorismate from D-erythrose 4-phosphate and phosphoenolpyruvate: step 4/7. Its function is as follows. Involved in the biosynthesis of the chorismate, which leads to the biosynthesis of aromatic amino acids. Catalyzes the reversible NADPH linked reduction of 3-dehydroshikimate (DHSA) to yield shikimate (SA). The protein is Shikimate dehydrogenase (NADP(+)) of Desulforamulus reducens (strain ATCC BAA-1160 / DSM 100696 / MI-1) (Desulfotomaculum reducens).